The primary structure comprises 143 residues: Transcriptional regulator MraZ (143 aa).

2 consecutive SpoVT-AbrB domains span residues 5-47 and 76-119; these read TYTP…SARE and ASDE…DSES.

The protein belongs to the MraZ family. As to quaternary structure, forms oligomers.

The protein resides in the cytoplasm. The protein localises to the nucleoid. The chain is Transcriptional regulator MraZ from Micrococcus luteus (strain ATCC 4698 / DSM 20030 / JCM 1464 / CCM 169 / CCUG 5858 / IAM 1056 / NBRC 3333 / NCIMB 9278 / NCTC 2665 / VKM Ac-2230) (Micrococcus lysodeikticus).